The chain runs to 351 residues: UDP-3-O-acylglucosamine N-acyltransferase (351 aa).

H240 functions as the Proton acceptor in the catalytic mechanism.

The protein belongs to the transferase hexapeptide repeat family. LpxD subfamily. Homotrimer.

The catalysed reaction is a UDP-3-O-[(3R)-3-hydroxyacyl]-alpha-D-glucosamine + a (3R)-hydroxyacyl-[ACP] = a UDP-2-N,3-O-bis[(3R)-3-hydroxyacyl]-alpha-D-glucosamine + holo-[ACP] + H(+). Its pathway is bacterial outer membrane biogenesis; LPS lipid A biosynthesis. Its function is as follows. Catalyzes the N-acylation of UDP-3-O-acylglucosamine using 3-hydroxyacyl-ACP as the acyl donor. Is involved in the biosynthesis of lipid A, a phosphorylated glycolipid that anchors the lipopolysaccharide to the outer membrane of the cell. The sequence is that of UDP-3-O-acylglucosamine N-acyltransferase from Pseudomonas putida (strain ATCC 700007 / DSM 6899 / JCM 31910 / BCRC 17059 / LMG 24140 / F1).